Here is a 2225-residue protein sequence, read N- to C-terminus: Multifunctional protein pyr1-3 (2225 aa).

Residue methionine 1 is modified to N-acetylmethionine. A GATase (Glutamine amidotransferase) region spans residues 40 to 390; the sequence is MVGYNESISD…NVCGEQQHKS (351 aa). L-glutamine contacts are provided by serine 51, glycine 245, and glycine 247. In terms of domain architecture, Glutamine amidotransferase type-1 spans 196 to 388; it reads KVIVLDCGIK…VDNVCGEQQH (193 aa). Cysteine 275 functions as the Nucleophile; for GATase activity in the catalytic mechanism. Glutamine 279, asparagine 317, glycine 319, and phenylalanine 320 together coordinate L-glutamine. Active-site for GATase activity residues include histidine 361 and glutamate 363. The interval 391–405 is linker; the sequence is PMNKSKIIDCPKGIN. The segment at 406-948 is CPSase A; the sequence is KVLILGSGGL…TNDVNINEKS (543 aa). Residues 406–1461 form a CPSase (Carbamoyl-phosphate synthase) region; that stretch reads KVLILGSGGL…MKGPMPIENV (1056 aa). Residues arginine 526, arginine 566, glycine 572, glycine 573, lysine 603, glutamate 610, glycine 636, isoleucine 637, histidine 638, glutamine 679, and glutamate 693 each coordinate ATP. ATP-grasp domains are found at residues 530–722 and 1069–1260; these read AEKL…KVAL and SRLL…KIII. Mg(2+) contacts are provided by glutamine 679, glutamate 693, and asparagine 695. Positions 679, 693, and 695 each coordinate Mn(2+). The tract at residues 949–1461 is CPSase B; that stretch reads YITLGSGSYR…MKGPMPIENV (513 aa). ATP contacts are provided by arginine 1105, lysine 1144, isoleucine 1146, glutamate 1151, glycine 1176, valine 1177, histidine 1178, serine 1179, glutamine 1219, and glutamate 1231. Positions 1219, 1231, and 1233 each coordinate Mg(2+). Glutamine 1219, glutamate 1231, and asparagine 1233 together coordinate Mn(2+). The region spanning 1324–1470 is the MGS-like domain; that stretch reads FKAPEKNVLL…VDWRTSNKII (147 aa). Residues 1463–1797 form a DHOase (dihydroorotase) region; the sequence is WRTSNKIIRL…VRGKVVKVVL (335 aa). Zn(2+) contacts are provided by histidine 1479 and histidine 1481. The (S)-dihydroorotate site is built by arginine 1483 and asparagine 1513. Lysine 1564, histidine 1599, cysteine 1622, histidine 1623, and glutamate 1646 together coordinate Zn(2+). Lysine 1564 carries the N6-carboxylysine modification. Residue arginine 1670 coordinates (S)-dihydroorotate. Zn(2+) is bound at residue aspartate 1695. Residue aspartate 1695 is the For DHOase activity of the active site. Positions 1699 and 1711 each coordinate (S)-dihydroorotate. Positions 1798-1916 are linker; sequence RGQIAFIDGK…DTLQTAFNIS (119 aa). The interval 1917–2225 is ATCase (Aspartate transcarbamylase); sequence DNSLAGKHIF…LLALVFGAGV (309 aa). Residues arginine 1974 and threonine 1975 each contribute to the carbamoyl phosphate site. Lysine 2002 lines the L-aspartate pocket. Carbamoyl phosphate contacts are provided by arginine 2023, histidine 2051, and glutamine 2054. Residues arginine 2084 and arginine 2145 each contribute to the L-aspartate site. Carbamoyl phosphate contacts are provided by leucine 2184 and proline 2185.

It in the N-terminal section; belongs to the CarA family. This sequence in the 2nd section; belongs to the CarB family. The protein in the 3rd section; belongs to the metallo-dependent hydrolases superfamily. DHOase family. CAD subfamily. In the C-terminal section; belongs to the aspartate/ornithine carbamoyltransferase superfamily. ATCase family. In terms of assembly, homohexamer. The cofactor is Mg(2+). It depends on Mn(2+) as a cofactor. Zn(2+) serves as cofactor.

The protein resides in the cytoplasm. The catalysed reaction is hydrogencarbonate + L-glutamine + 2 ATP + H2O = carbamoyl phosphate + L-glutamate + 2 ADP + phosphate + 2 H(+). It carries out the reaction L-glutamine + H2O = L-glutamate + NH4(+). The enzyme catalyses hydrogencarbonate + NH4(+) + 2 ATP = carbamoyl phosphate + 2 ADP + phosphate + 2 H(+). It catalyses the reaction carbamoyl phosphate + L-aspartate = N-carbamoyl-L-aspartate + phosphate + H(+). The catalysed reaction is (S)-dihydroorotate + H2O = N-carbamoyl-L-aspartate + H(+). It participates in pyrimidine metabolism; UMP biosynthesis via de novo pathway; (S)-dihydroorotate from bicarbonate: step 1/3. The protein operates within pyrimidine metabolism; UMP biosynthesis via de novo pathway; (S)-dihydroorotate from bicarbonate: step 2/3. Its pathway is pyrimidine metabolism; UMP biosynthesis via de novo pathway; (S)-dihydroorotate from bicarbonate: step 3/3. Allosterically regulated and controlled by phosphorylation. 5-phosphoribose 1-diphosphate is an activator while UMP is an inhibitor of the CPSase reaction. In terms of biological role, multifunctional protein that encodes the first 3 enzymatic activities of the de novo pyrimidine pathway: carbamoylphosphate synthetase (CPSase; EC 6.3.5.5), aspartate transcarbamylase (ATCase; EC 2.1.3.2) and dihydroorotase (DHOase; EC 3.5.2.3). The CPSase-function is accomplished in 2 steps, by a glutamine-dependent amidotransferase activity (GATase) that binds and cleaves glutamine to produce ammonia, followed by an ammonium-dependent carbamoyl phosphate synthetase, which reacts with the ammonia, hydrogencarbonate and ATP to form carbamoyl phosphate. The endogenously produced carbamoyl phosphate is sequestered and channeled to the ATCase active site. ATCase then catalyzes the formation of carbamoyl-L-aspartate from L-aspartate and carbamoyl phosphate. In the last step, DHOase catalyzes the cyclization of carbamoyl aspartate to dihydroorotate. In Dictyostelium discoideum (Social amoeba), this protein is Multifunctional protein pyr1-3 (pyr1-3).